The primary structure comprises 730 residues: Probable palmitoyltransferase AKR2 (730 aa).

ANK repeat units lie at residues 32–62 (FVVE…DINK), 66–95 (DELP…NVNQ), 100–129 (ERAT…NPTL), 133–166 (QGLN…NVDI), 172–201 (NNRT…TVAL), and 205–234 (RGFN…NFYE). A run of 4 helical transmembrane segments spans residues 283-303 (LMIF…SLIL), 309-328 (IALS…KFVL), 344-364 (TPFF…IWVK), and 376-396 (AKDA…LKLV). In terms of domain architecture, DHHC spans 429 to 479 (NFCVETLERKPLRSKYSLFSGALVARFNHYCPWVYNDIGLKNHKLFMFFAF). Catalysis depends on cysteine 459, which acts as the S-palmitoyl cysteine intermediate. 2 helical membrane-spanning segments follow: residues 473–493 (LFMF…WLCL) and 530–550 (TFFL…MLIV).

The protein belongs to the DHHC palmitoyltransferase family. AKR/ZDHHC17 subfamily.

Its subcellular location is the membrane. It carries out the reaction L-cysteinyl-[protein] + hexadecanoyl-CoA = S-hexadecanoyl-L-cysteinyl-[protein] + CoA. The protein is Probable palmitoyltransferase AKR2 (AKR2) of Saccharomyces uvarum (strain ATCC 76518 / CBS 7001 / CLIB 283 / NBRC 10550 / MCYC 623 / NCYC 2669 / NRRL Y-11845) (Yeast).